Consider the following 373-residue polypeptide: D-alanine--D-alanine ligase (373 aa).

The region spanning 156 to 363 (KKLLAADGLP…YPTLLATMIE (208 aa)) is the ATP-grasp domain. Position 184 to 239 (184 to 239 (CERLGLPVFVKPARGGSSIGVSRVSSWDQLPAAVARARRHDPKVIVEAAISGRELE)) interacts with ATP. The Mg(2+) site is built by D318, E330, and N332.

It belongs to the D-alanine--D-alanine ligase family. It depends on Mg(2+) as a cofactor. Mn(2+) serves as cofactor.

The protein resides in the cytoplasm. The catalysed reaction is 2 D-alanine + ATP = D-alanyl-D-alanine + ADP + phosphate + H(+). It participates in cell wall biogenesis; peptidoglycan biosynthesis. Cell wall formation. In Mycobacterium tuberculosis (strain ATCC 25177 / H37Ra), this protein is D-alanine--D-alanine ligase.